The chain runs to 527 residues: Amine oxidase [flavin-containing] A (527 aa).

M1 carries the post-translational modification N-acetylmethionine. Residues M1 to S497 lie on the Cytoplasmic side of the membrane. Phosphoserine is present on S383. At C406 the chain carries S-8alpha-FAD cysteine. Residues V498–L518 form a helical; Anchor for type IV membrane protein membrane-spanning segment. Residues Y519–S527 are Mitochondrial intermembrane-facing. The interval K520–K522 is interaction with membrane phospholipid headgroups.

The protein belongs to the flavin monoamine oxidase family. As to quaternary structure, monomer, homo- or heterodimer (containing two subunits of similar size). Each subunit contains a covalently bound flavin. Enzymatically active as monomer. FAD serves as cofactor.

Its subcellular location is the mitochondrion outer membrane. The enzyme catalyses a secondary aliphatic amine + O2 + H2O = a primary amine + an aldehyde + H2O2. The catalysed reaction is a primary methyl amine + O2 + H2O = an aldehyde + H2O2 + NH4(+). It carries out the reaction (R)-adrenaline + O2 + H2O = (R)-3,4-dihydroxymandelaldehyde + methylamine + H2O2. It catalyses the reaction dopamine + O2 + H2O = 3,4-dihydroxyphenylacetaldehyde + H2O2 + NH4(+). The enzyme catalyses tyramine + O2 + H2O = (4-hydroxyphenyl)acetaldehyde + H2O2 + NH4(+). The catalysed reaction is (R)-noradrenaline + O2 + H2O = (R)-3,4-dihydroxymandelaldehyde + H2O2 + NH4(+). It carries out the reaction serotonin + O2 + H2O = (5-hydroxyindol-3-yl)acetaldehyde + H2O2 + NH4(+). It catalyses the reaction kynuramine + O2 + H2O = 3-(2-aminophenyl)-3-oxopropanal + H2O2 + NH4(+). The enzyme catalyses tryptamine + O2 + H2O = indole-3-acetaldehyde + H2O2 + NH4(+). The catalysed reaction is 2-phenylethylamine + O2 + H2O = 2-phenylacetaldehyde + H2O2 + NH4(+). In terms of biological role, catalyzes the oxidative deamination of primary and some secondary amine such as neurotransmitters, with concomitant reduction of oxygen to hydrogen peroxide and has important functions in the metabolism of neuroactive and vasoactive amines in the central nervous system and peripheral tissues. Preferentially oxidizes serotonin. Also catalyzes the oxidative deamination of kynuramine to 3-(2-aminophenyl)-3-oxopropanal that can spontaneously condense to 4-hydroxyquinoline. This Pongo abelii (Sumatran orangutan) protein is Amine oxidase [flavin-containing] A.